Consider the following 1047-residue polypeptide: MPKRTDIQSVLVIGSGPIVIGQAAEFDYAGAQACLALREEGIQVILVNNNPATVMTDEACADVVYFEPLTVASVKNIIERERPDGLLATLGGQTGLNLAMKLEEAGILEAYNVELLGTPMESIKKGEDREAFRQLMHELHEPVPESEIVHSVAEAVDFANTVGYPIIVRPAYTLGGAGGGIAESEEALIRIVKGGLELSPIQQCLIEKSIAGFKEIEYEVMRDSNDTCITVCNMENIDPVGVHTGDSIVVAPSQTLTDQEYQMLRSASLKIIRTLGIVGGCNIQFALDPDSKQYYLIEVNPRVSRSSALASKATGYPIARMAAKLSLGYGLHELKNPVTEDTYASFEPSLDYVVVKFPRWPFDKLVHVNRELGTQMKATGEVMAIERNLEAGLQKAVRSLEIKTHGLSLPSLSQWEDSELWVIVKKADDRRFFAILELLRRGVTIEAIHEQTKIDRFFLTSFAKLMTLEKEIAGQSLDDITSDELSTYKKYGFSDEWLASSWGVGLADVRHTRKALGVVPSYKMVDTCAAEFEAKTPYYYSSWTGENDLLLPEKAKERVLIIGSGPIRIGQGIEFDYCSVHGAKSLRARNFEAIIINNNPETVSTDYETADRLYFEPLAVEDVLNVIEVENVDHVIVQLGGQTAIGLTKGLEEAGVSILGTTQDVIDQLEDRERFYEFMRSVEVPHIPGKTAETKEELLKAAQSIGYPILLRPSYVIGGQGMFIASNQEELAAFCEDKNHSVTFPILVDAYYPGVEFEVDVLTDGSDIFIPGMFEHVEKAGVHSGDSMAVTPPPTLEAKWKQQAINYTRQIAKGMAYKGLFNIQFVLYDEELYVIEVNPRASRTVPIFSKATSLPLITYTIDVLFGKTIAELGLSAGYRKESPYYTVKAPVFSYQKLAGLDPLLEAEMKSTGELIAISKDLPSAFRKAFAWGEEQTPALFRKKGSVFCQVDRAYDTEWQPLLRQLKEKGYSVVTEEAMSFSEWLASEDAICLVSVPAPGQKTGKQNREEALKQRVTVVSDLATFEKMIECLEVKDGEPFLLPDVVMN.

The segment at 1 to 401 (MPKRTDIQSV…GLQKAVRSLE (401 aa)) is carboxyphosphate synthetic domain. 12 residues coordinate ATP: R129, R169, G175, G176, K208, I210, E215, G241, V242, H243, Q284, and E298. The ATP-grasp 1 domain occupies 133–327 (RQLMHELHEP…IARMAAKLSL (195 aa)). Q284, E298, and N300 together coordinate Mg(2+). 3 residues coordinate Mn(2+): Q284, E298, and N300. Residues 402–549 (IKTHGLSLPS…YSSWTGENDL (148 aa)) are oligomerization domain. Positions 550-933 (LLPEKAKERV…AFRKAFAWGE (384 aa)) are carbamoyl phosphate synthetic domain. The 190-residue stretch at 676–865 (YEFMRSVEVP…LITYTIDVLF (190 aa)) folds into the ATP-grasp 2 domain. ATP is bound by residues R712, A750, E756, G781, V782, H783, S784, Q824, and E836. Mg(2+) contacts are provided by Q824, E836, and N838. Positions 824, 836, and 838 each coordinate Mn(2+). The tract at residues 934–1047 (EQTPALFRKK…PFLLPDVVMN (114 aa)) is allosteric domain. The MGS-like domain occupies 937–1047 (PALFRKKGSV…PFLLPDVVMN (111 aa)).

The protein belongs to the CarB family. As to quaternary structure, composed of two chains; the small (or glutamine) chain promotes the hydrolysis of glutamine to ammonia, which is used by the large (or ammonia) chain to synthesize carbamoyl phosphate. Tetramer of heterodimers (alpha,beta)4. It depends on Mg(2+) as a cofactor. The cofactor is Mn(2+).

The catalysed reaction is hydrogencarbonate + L-glutamine + 2 ATP + H2O = carbamoyl phosphate + L-glutamate + 2 ADP + phosphate + 2 H(+). It catalyses the reaction hydrogencarbonate + NH4(+) + 2 ATP = carbamoyl phosphate + 2 ADP + phosphate + 2 H(+). Its pathway is amino-acid biosynthesis; L-arginine biosynthesis; carbamoyl phosphate from bicarbonate: step 1/1. In terms of biological role, large subunit of the glutamine-dependent carbamoyl phosphate synthetase (CPSase). CPSase catalyzes the formation of carbamoyl phosphate from the ammonia moiety of glutamine, carbonate, and phosphate donated by ATP, constituting the first step of the biosynthetic pathway leading to arginine and/or urea. The large subunit (synthetase) binds the substrates ammonia (free or transferred from glutamine from the small subunit), hydrogencarbonate and ATP and carries out an ATP-coupled ligase reaction, activating hydrogencarbonate by forming carboxy phosphate which reacts with ammonia to form carbamoyl phosphate. This is Carbamoyl phosphate synthase arginine-specific large chain from Halalkalibacterium halodurans (strain ATCC BAA-125 / DSM 18197 / FERM 7344 / JCM 9153 / C-125) (Bacillus halodurans).